The chain runs to 1557 residues: Target of rapamycin complex 1 subunit KOG1 (1557 aa).

HEAT repeat units follow at residues 548-586 (RHPP…WAVY), 588-625 (SLSI…IDYK), 777-814 (CMNT…GFQD), and 888-925 (RQEI…RYSN). Positions 1084–1098 (SESNSDSDTQSSNTS) are enriched in low complexity. Residues 1084 to 1114 (SESNSDSDTQSSNTSMKSHTSKKGPSGLYLL) are disordered. WD repeat units lie at residues 1207 to 1248 (NNKS…SKFS), 1252 to 1293 (PFGT…DTFK), 1296 to 1346 (SAWR…VEVD), 1350 to 1390 (KTSS…RDSM), 1400 to 1440 (KQGV…PVES), 1452 to 1492 (SQQK…NSFK), and 1517 to 1557 (TSDA…IDYF).

The protein belongs to the WD repeat RAPTOR family. In terms of assembly, the target of rapamycin complex 1 (TORC1) is composed of at least KOG1, LST8, TCO89 and either TOR1 (TORC1-A) or TOR2 (TORC1-B). Interacts with PIB2; following activation of PIB2 by glutamine or cysteine. TORC1 binds to and is inhibited by FKBP-rapamycin.

It is found in the cell membrane. It localises to the vacuole membrane. Its function is as follows. Component of TORC1, which regulates multiple cellular processes to control cell growth in response to environmental signals. Nutrient limitation and environmental stress signals cause inactivation of TORC1. Active TORC1 positively controls ribosome biogenesis via control of rRNA, ribosomal protein and tRNA gene expression, and rRNA processing. TORC1 positively controls protein biosynthesis by regulation of mRNA stability, translation initiation factor activity, and high-affinity amino acid permeases that serve to provide amino acids for use by the translation machinery. TORC1 also promotes growth by sequestering a number of nutrient and general stress-responsive transcription factors in the cytoplasm. TORC1 negatively controls macroautophagy, a process to recycle surplus cytoplasmic mass under nutrient starvation conditions. KOG1 may have a role in binding and recruiting substrates of TORC1. This is Target of rapamycin complex 1 subunit KOG1 (KOG1) from Saccharomyces cerevisiae (strain ATCC 204508 / S288c) (Baker's yeast).